The chain runs to 513 residues: Probable cytosol aminopeptidase (513 aa).

K277 and D282 together coordinate Mn(2+). Residue K289 is part of the active site. Residues D300, D359, and E361 each contribute to the Mn(2+) site. Residue R363 is part of the active site.

It belongs to the peptidase M17 family. Requires Mn(2+) as cofactor.

It localises to the cytoplasm. It catalyses the reaction Release of an N-terminal amino acid, Xaa-|-Yaa-, in which Xaa is preferably Leu, but may be other amino acids including Pro although not Arg or Lys, and Yaa may be Pro. Amino acid amides and methyl esters are also readily hydrolyzed, but rates on arylamides are exceedingly low.. The catalysed reaction is Release of an N-terminal amino acid, preferentially leucine, but not glutamic or aspartic acids.. Its function is as follows. Presumably involved in the processing and regular turnover of intracellular proteins. Catalyzes the removal of unsubstituted N-terminal amino acids from various peptides. The polypeptide is Probable cytosol aminopeptidase (Mycobacterium sp. (strain KMS)).